The chain runs to 204 residues: MGVLGGDAHVPIGSQVSPGSVVVTNNESFGHRKLLKGVDFLVRIKAFAFCLAVIVLLKNNVQTTVIAPGIVLQAKYNNTKAPVSLLVLASICCGYAFLQAVVSLLSFIRDKRVLNNTVLAWLTFLLDQVLTYLLLGSAAATAEAAYIAKRGEDKVQWKAVCGPFKRFCDHFAATVFLSFIAVIAFAVSAAISAYYLFRKSKGFK.

Residues 1–36 lie on the Cytoplasmic side of the membrane; sequence MGVLGGDAHVPIGSQVSPGSVVVTNNESFGHRKLLK. Residues 37–57 form a helical membrane-spanning segment; that stretch reads GVDFLVRIKAFAFCLAVIVLL. Residues 58–84 lie on the Extracellular side of the membrane; sequence KNNVQTTVIAPGIVLQAKYNNTKAPVS. The N-linked (GlcNAc...) asparagine glycan is linked to N77. Residues 85–105 traverse the membrane as a helical segment; the sequence is LLVLASICCGYAFLQAVVSLL. The Cytoplasmic segment spans residues 106 to 117; that stretch reads SFIRDKRVLNNT. A helical transmembrane segment spans residues 118–138; it reads VLAWLTFLLDQVLTYLLLGSA. Residues 139–170 lie on the Extracellular side of the membrane; it reads AATAEAAYIAKRGEDKVQWKAVCGPFKRFCDH. Residues 171–191 form a helical membrane-spanning segment; the sequence is FAATVFLSFIAVIAFAVSAAI. Over 192–204 the chain is Cytoplasmic; the sequence is SAYYLFRKSKGFK.

It belongs to the Casparian strip membrane proteins (CASP) family. Homodimer and heterodimers.

It localises to the cell membrane. This Selaginella moellendorffii (Spikemoss) protein is CASP-like protein 2U2.